We begin with the raw amino-acid sequence, 1229 residues long: ABC transporter B family member 3 (1229 aa).

The helical transmembrane segment at 22 to 42 (VLLMIVGSIGAIGNGVGFPLM) threads the bilayer. Positions 25–313 (MIVGSIGAIG…TTPCLTAFAA (289 aa)) constitute an ABC transmembrane type-1 1 domain. The N-linked (GlcNAc...) asparagine glycan is linked to Asn-56. The next 5 membrane-spanning stretches (helical) occupy residues 73–93 (FVYLGLGTLGAAFLQVACWMI), 149–169 (FIQLIATFVGGFVLAFVKGWL), 172–192 (LVMLVSIPLLAIAGAAMPIIV), 252–272 (GLGLGVVFFVFFCSYALAIWF), and 281–301 (GYTGGEVVNVMVTVVASSMSL). One can recognise an ABC transporter 1 domain in the interval 348–584 (IELRDVCFSY…HEGAYAQLIR (237 aa)). 383–390 (GESGSGKS) lines the ATP pocket. Asn-450 carries N-linked (GlcNAc...) asparagine glycosylation. Over residues 594–606 (RLESSNELRDRSI) the composition is skewed to basic and acidic residues. The interval 594-614 (RLESSNELRDRSINRGSSRNI) is disordered. An N-linked (GlcNAc...) asparagine glycan is attached at Asn-645. The next 2 helical transmembrane spans lie at 661-681 (ILILGTLLGAVNGTIFPIFGI) and 706-726 (MIFVLLGVASLIVYPMHTYLF). Residues 662–949 (LILGTLLGAV…ASSFAPDSSK (288 aa)) enclose the ABC transmembrane type-1 2 domain. N-linked (GlcNAc...) asparagine glycosylation occurs at Asn-758. Transmembrane regions (helical) follow at residues 797–817 (IIAFTASWKLAVIILVMIPLI), 888–908 (GVGFGISFFVLYSVYASCFYV), and 923–943 (VFQVFLALTMTAIGISQASSF). Positions 984–1222 (IELCHISFTY…EGGVYASLVQ (239 aa)) constitute an ABC transporter 2 domain. 1019–1026 (GESGSGKS) is a binding site for ATP. Asn-1073 and Asn-1173 each carry an N-linked (GlcNAc...) asparagine glycan.

The protein belongs to the ABC transporter superfamily. ABCB family. Multidrug resistance exporter (TC 3.A.1.201) subfamily.

It is found in the membrane. This Arabidopsis thaliana (Mouse-ear cress) protein is ABC transporter B family member 3 (ABCB3).